The sequence spans 344 residues: Phenylalanine--tRNA ligase alpha subunit (344 aa).

E256 lines the Mg(2+) pocket.

It belongs to the class-II aminoacyl-tRNA synthetase family. Phe-tRNA synthetase alpha subunit type 1 subfamily. Tetramer of two alpha and two beta subunits. Requires Mg(2+) as cofactor.

Its subcellular location is the cytoplasm. The catalysed reaction is tRNA(Phe) + L-phenylalanine + ATP = L-phenylalanyl-tRNA(Phe) + AMP + diphosphate + H(+). In Bacillus cereus (strain G9842), this protein is Phenylalanine--tRNA ligase alpha subunit.